The sequence spans 122 residues: Large ribosomal subunit protein uL14 (122 aa).

Belongs to the universal ribosomal protein uL14 family. Part of the 50S ribosomal subunit. Forms a cluster with proteins L3 and L19. In the 70S ribosome, L14 and L19 interact and together make contacts with the 16S rRNA in bridges B5 and B8.

Its function is as follows. Binds to 23S rRNA. Forms part of two intersubunit bridges in the 70S ribosome. The chain is Large ribosomal subunit protein uL14 from Acidiphilium cryptum (strain JF-5).